The chain runs to 332 residues: Tetraacyldisaccharide 4'-kinase (332 aa).

52-59 (TLGGAGKT) is a binding site for ATP.

It belongs to the LpxK family.

It carries out the reaction a lipid A disaccharide + ATP = a lipid IVA + ADP + H(+). The protein operates within glycolipid biosynthesis; lipid IV(A) biosynthesis; lipid IV(A) from (3R)-3-hydroxytetradecanoyl-[acyl-carrier-protein] and UDP-N-acetyl-alpha-D-glucosamine: step 6/6. Its function is as follows. Transfers the gamma-phosphate of ATP to the 4'-position of a tetraacyldisaccharide 1-phosphate intermediate (termed DS-1-P) to form tetraacyldisaccharide 1,4'-bis-phosphate (lipid IVA). The protein is Tetraacyldisaccharide 4'-kinase of Methylobacterium sp. (strain 4-46).